Consider the following 97-residue polypeptide: Putative septation protein SpoVG (97 aa).

This sequence belongs to the SpoVG family.

Functionally, essential for sporulation. Interferes with or is a negative regulator of the pathway leading to asymmetric septation. This is Putative septation protein SpoVG from Bacillus licheniformis (strain ATCC 14580 / DSM 13 / JCM 2505 / CCUG 7422 / NBRC 12200 / NCIMB 9375 / NCTC 10341 / NRRL NRS-1264 / Gibson 46).